The chain runs to 467 residues: Histidine--tRNA ligase (467 aa).

The protein belongs to the class-II aminoacyl-tRNA synthetase family. Homodimer.

It is found in the cytoplasm. The catalysed reaction is tRNA(His) + L-histidine + ATP = L-histidyl-tRNA(His) + AMP + diphosphate + H(+). The sequence is that of Histidine--tRNA ligase from Gloeobacter violaceus (strain ATCC 29082 / PCC 7421).